A 972-amino-acid polypeptide reads, in one-letter code: Isoleucine--tRNA ligase (972 aa).

Residues 63–73 carry the 'HIGH' region motif; the sequence is PYANGNIHIGH. Residue Glu-603 coordinates L-isoleucyl-5'-AMP. The 'KMSKS' region signature appears at 644-648; it reads KMSKS. Lys-647 contacts ATP.

Belongs to the class-I aminoacyl-tRNA synthetase family. IleS type 1 subfamily. Monomer.

The protein localises to the cytoplasm. The catalysed reaction is tRNA(Ile) + L-isoleucine + ATP = L-isoleucyl-tRNA(Ile) + AMP + diphosphate. Its function is as follows. Catalyzes the attachment of isoleucine to tRNA(Ile). As IleRS can inadvertently accommodate and process structurally similar amino acids such as valine, to avoid such errors it has two additional distinct tRNA(Ile)-dependent editing activities. One activity is designated as 'pretransfer' editing and involves the hydrolysis of activated Val-AMP. The other activity is designated 'posttransfer' editing and involves deacylation of mischarged Val-tRNA(Ile). The polypeptide is Isoleucine--tRNA ligase (Brucella suis biovar 1 (strain 1330)).